Here is a 548-residue protein sequence, read N- to C-terminus: Poly(ADP-ribose) glycohydrolase 1 (548 aa).

It belongs to the poly(ADP-ribose) glycohydrolase family.

It catalyses the reaction [(1''-&gt;2')-ADP-alpha-D-ribose](n) + H2O = [(1''-&gt;2')-ADP-alpha-D-ribose](n-1) + ADP-D-ribose. In terms of biological role, poly(ADP-ribose) synthesized after DNA damage is only present transiently and is rapidly degraded by poly(ADP-ribose) glycohydrolase. Involved in establishing period length of the circadian oscillator. May regulate post-translational poly(ADP-ribosyl)ation of an oscillator component. The polypeptide is Poly(ADP-ribose) glycohydrolase 1 (PARG1) (Arabidopsis thaliana (Mouse-ear cress)).